The chain runs to 411 residues: Putative competence-damage inducible protein (411 aa).

The protein belongs to the CinA family.

This Caldicellulosiruptor bescii (strain ATCC BAA-1888 / DSM 6725 / KCTC 15123 / Z-1320) (Anaerocellum thermophilum) protein is Putative competence-damage inducible protein.